A 364-amino-acid polypeptide reads, in one-letter code: Thebaine 6-O-demethylase (364 aa).

Residues 214–314 (GTQAMRMNYY…RLSIATFHDP (101 aa)) form the Fe2OG dioxygenase domain. Tyr223 serves as a coordination point for 2-oxoglutarate. Residues His238, Asp240, and His295 each contribute to the Fe cation site. 2 residues coordinate 2-oxoglutarate: Arg305 and Ser307.

This sequence belongs to the iron/ascorbate-dependent oxidoreductase family. It depends on L-ascorbate as a cofactor. Requires Fe cation as cofactor. Mainly expressed in stems and leaves and, to a lower extent, in capsules and roots.

It carries out the reaction thebaine + 2-oxoglutarate + O2 = neopinone + formaldehyde + succinate + CO2. The enzyme catalyses oripavine + 2-oxoglutarate + O2 = neomorphinone + formaldehyde + succinate + CO2. It catalyses the reaction (S)-canadine + S-adenosyl-L-methionine = (S)-cis-N-methylcanadine + S-adenosyl-L-homocysteine. The catalysed reaction is thebaine + 2-oxoglutarate + O2 = 6-O-demethylthebaine + formaldehyde + succinate + CO2 + H(+). The protein operates within alkaloid biosynthesis; morphine biosynthesis. Moderate substrate inhibition. Not inhibited in vitro by acylcyclohexanediones. In terms of biological role, non-heme dioxygenase involved in biosynthesis of morphinan-type benzylisoquinoline and opiate alkaloids natural products. Mediates the conversion of thebaine to neopinone. Also catalyzes, with lower efficiency, the 6-O-demethylation of oripavine to neomorphinone, which is converted spontaneously to morphinone. Supports dealkylation reactions such as O,O-demethylenation in the metabolism of protopine, benzo[c]phenanthridine, and rhoeadine alkaloids; cleaves a methylenedioxy bridge leaving two hydroxyl groups. Catalyzes the O-demethylation of methylenedioxy bridges on protopine alkaloids such as allocryptopine. No activity with (S)-reticuline, salutaridine, papaverine, (S)-corytuberine, (S)-scoulerine, pavine, noscapine or codeine. The polypeptide is Thebaine 6-O-demethylase (Papaver somniferum (Opium poppy)).